The sequence spans 566 residues: Putative ABC transporter ATP-binding protein BT9727_2424 (566 aa).

ABC transporter domains are found at residues 5–246 (ISFE…GLRE) and 300–533 (LKVE…ANLK). Residues 39-46 (GRSGSGKS) and 333-340 (GHNGAGKS) contribute to the ATP site.

This sequence belongs to the ABC transporter superfamily.

It localises to the cell membrane. Its function is as follows. Probably part of an ABC transporter complex. Responsible for energy coupling to the transport system. The sequence is that of Putative ABC transporter ATP-binding protein BT9727_2424 from Bacillus thuringiensis subsp. konkukian (strain 97-27).